Consider the following 231-residue polypeptide: uncharacterized protein (231 aa).

A helical transmembrane segment spans residues 86–106 (LIILFVIGLIITIIGLLMYEP).

It localises to the membrane. This is an uncharacterized protein from Methanocaldococcus jannaschii (strain ATCC 43067 / DSM 2661 / JAL-1 / JCM 10045 / NBRC 100440) (Methanococcus jannaschii).